The chain runs to 587 residues: FAD-dependent monooxygenase ankC (587 aa).

A helical transmembrane segment spans residues 7–27; that stretch reads AVDVLIIGAGPAGLIAAMWMA. FAD is bound by residues tyrosine 245 and aspartate 311.

Belongs to the PheA/TfdB FAD monooxygenase family. In terms of assembly, homodimer. FAD is required as a cofactor.

The protein localises to the membrane. The catalysed reaction is cyclo(L-arginyl-L-dehydrotyrosyl) + AH2 + O2 = cyclo(L-arginyl-(Z)-dehydro-3,4-dihydroxytyrosyl) + A + H2O. The protein operates within secondary metabolite biosynthesis. FAD-dependent monooxygenase; part of the ank cluster that mediates the biosynthesis of NK13650 C, a highly modified cyclo-arginine-tyrosine dipeptide. AnkC uses as substrate the dehydro-cyclodipeptide intermediate generated by the monooxygase ankB and acts as a hydroxylase that installs the m-OH through a canonical flavin-dependent aromatic hydroxylation mechanism. Within the pathway, the cyclodipeptide synthase ankA acts as the scaffold-generating enzyme and is responsible for formation of the cyclo-Arg-Tyr diketopiperazine (cRY) from L-Arg and L-Tyr. The ankA product cRY is desaturated by the cytochrome P450 monooxygenase ankB to yield a dehydro-cyclodipeptide intermediate. The FAD-dependent monooxygenase ankC then installs the m-OH, ankD catalyzes the attachment of L-homoserine, and ankE ligates citrate to the ankD product to yield NK13650 B. The O-methyltransferase ankF is responsible for methylation of the C-17 phenol group of NK13650 B to produce NK13650 D. Amidation of NK13650 D with L-Asp by ankG then leads to the production of NK13650 C, whereas amidation of NK13650 B produces NK13650 A. The polypeptide is FAD-dependent monooxygenase ankC (Aspergillus thermomutatus (Neosartorya pseudofischeri)).